The following is a 385-amino-acid chain: Dual-specificity RNA methyltransferase RlmN (385 aa).

The active-site Proton acceptor is Glu113. In terms of domain architecture, Radical SAM core spans 120 to 352 (VGRAGALCVS…NRAGYASPIR (233 aa)). A disulfide bridge connects residues Cys127 and Cys363. 3 residues coordinate [4Fe-4S] cluster: Cys134, Cys138, and Cys141. S-adenosyl-L-methionine is bound by residues 189–190 (GE), Ser221, 243–245 (SLH), and Asn320. The S-methylcysteine intermediate role is filled by Cys363.

It belongs to the radical SAM superfamily. RlmN family. It depends on [4Fe-4S] cluster as a cofactor.

It is found in the cytoplasm. It catalyses the reaction adenosine(2503) in 23S rRNA + 2 reduced [2Fe-2S]-[ferredoxin] + 2 S-adenosyl-L-methionine = 2-methyladenosine(2503) in 23S rRNA + 5'-deoxyadenosine + L-methionine + 2 oxidized [2Fe-2S]-[ferredoxin] + S-adenosyl-L-homocysteine. The catalysed reaction is adenosine(37) in tRNA + 2 reduced [2Fe-2S]-[ferredoxin] + 2 S-adenosyl-L-methionine = 2-methyladenosine(37) in tRNA + 5'-deoxyadenosine + L-methionine + 2 oxidized [2Fe-2S]-[ferredoxin] + S-adenosyl-L-homocysteine. Functionally, specifically methylates position 2 of adenine 2503 in 23S rRNA and position 2 of adenine 37 in tRNAs. m2A2503 modification seems to play a crucial role in the proofreading step occurring at the peptidyl transferase center and thus would serve to optimize ribosomal fidelity. This chain is Dual-specificity RNA methyltransferase RlmN, found in Phenylobacterium zucineum (strain HLK1).